Here is a 310-residue protein sequence, read N- to C-terminus: MLVVEVANGRSLVWGAEAVQALRERLGVGGRTVGALPRGPRQNSRLGLPLLLMPEEARLLAEIGAVTLVSAPRPDSRHHSLALTSFKRQQEESFQEQSALAAEARETRRQELLEKITEGQAAKKQKLEQASGASSSQEAGSSQAAKEDETSDGQASGEQEEAGPSSSQAGPSNGVAPLPRSALLVQLATARPRPVKARPLDWRVQSKDWPHAGRPAHELRYSIYRDLWERGFFLSAAGKFGGDFLVYPGDPLRFHAHYIAQCWAPEDTIPLQDLVAAGRLGTSVRKTLLLCSPQPDGKVVYTSLQWASLQ.

The tract at residues 119-177 is disordered; sequence GQAAKKQKLEQASGASSSQEAGSSQAAKEDETSDGQASGEQEEAGPSSSQAGPSNGVAP. A compositionally biased stretch (low complexity) spans 128-144; sequence EQASGASSSQEAGSSQA. Catalysis depends on residues Tyr247, His255, and Lys286.

This sequence belongs to the tRNA-intron endonuclease family. In terms of assembly, tRNA splicing endonuclease is a heterotetramer composed of TSEN2, TSEN15, TSEN34/LENG5 and TSEN54. tRNA splicing endonuclease complex also contains proteins of the pre-mRNA 3'-end processing machinery such as CLP1, CPSF1, CPSF4 and CSTF2.

Its subcellular location is the nucleus. It localises to the nucleolus. The enzyme catalyses pretRNA = a 3'-half-tRNA molecule with a 5'-OH end + a 5'-half-tRNA molecule with a 2',3'-cyclic phosphate end + an intron with a 2',3'-cyclic phosphate and a 5'-hydroxyl terminus.. Constitutes one of the two catalytic subunit of the tRNA-splicing endonuclease complex, a complex responsible for identification and cleavage of the splice sites in pre-tRNA. It cleaves pre-tRNA at the 5'- and 3'-splice sites to release the intron. The products are an intron and two tRNA half-molecules bearing 2',3'-cyclic phosphate and 5'-OH termini. There are no conserved sequences at the splice sites, but the intron is invariably located at the same site in the gene, placing the splice sites an invariant distance from the constant structural features of the tRNA body. It probably carries the active site for 3'-splice site cleavage. The tRNA splicing endonuclease is also involved in mRNA processing via its association with pre-mRNA 3'-end processing factors, establishing a link between pre-tRNA splicing and pre-mRNA 3'-end formation, suggesting that the endonuclease subunits function in multiple RNA-processing events. This is tRNA-splicing endonuclease subunit Sen34 (TSEN34) from Homo sapiens (Human).